The following is a 232-amino-acid chain: Oxidoreductase 1 (232 aa).

It belongs to the MQO family. It depends on FAD as a cofactor.

Its function is as follows. Oxidoreductase; part of the gene cluster that mediates the biosynthesis of elsinochromes, pigments consisting of at least four interconvertible tautomers (A, B, C and D) that have a core phenolic quinone to which various side chains are attached and which play an important role in fungal pathogenesis. The non-reducing polyketide synthase PKS1 was proposed to iteratively catalyze decarboxylation between acetyl-CoA and malonyl-CoA subunits for polyketide chain elongation. The released polyketide undergoes cyclization to form an aromatic ring, and proceeds via serial modification steps to produce the heptaketide back- bone of elsinochrome. As elsinochrome has a symmetrical structure, two identical heptaketides are fused to form a core 1,2-dihydrobenzo-perylene ring structure, which can then be successively modified to produce the various derivatives of elsinochrome. Some of these reactions may be cooperatively carried out, at least in part, by the products of RDT1, OXR1 and PKS1. PRF1, embedded within the elsinochrome cluster possibly functions to stabilize some of the biosynthetic enzymes required for elsinochrome production. As prefoldin is a hexamer containing 2 a and 4 b subunits, additional prefoldin subunits, whose coding genes may not immediately link to the elsinochrome biosynthetic gene cluster, are required to fulfill the chaperone function. In addition, no methyltransferase-coding gene exists within the biosynthetic gene cluster, even though elsinochrome has four methyl groups at positions C3, C7, C8 and C12. Apparently, the identified gene cluster does not contain the entire entourage of genes responsible for elsinochrome biosynthesis. Once elsinochrome is synthesized, it must be exported outside the fungal cells, which is probably accomplished by the ECT1 transporter, to avoid toxicity. This Elsinoe fawcettii (Citrus scab fungus) protein is Oxidoreductase 1.